A 317-amino-acid chain; its full sequence is tRNA dimethylallyltransferase (317 aa).

14–21 (GPTASGKT) contributes to the ATP binding site. Substrate is bound at residue 16–21 (TASGKT). Interaction with substrate tRNA regions lie at residues 39 to 42 (DSAL), 163 to 167 (QRIQR), and 248 to 253 (RCVGYR).

This sequence belongs to the IPP transferase family. As to quaternary structure, monomer. The cofactor is Mg(2+).

It catalyses the reaction adenosine(37) in tRNA + dimethylallyl diphosphate = N(6)-dimethylallyladenosine(37) in tRNA + diphosphate. Catalyzes the transfer of a dimethylallyl group onto the adenine at position 37 in tRNAs that read codons beginning with uridine, leading to the formation of N6-(dimethylallyl)adenosine (i(6)A). The chain is tRNA dimethylallyltransferase from Paraburkholderia phymatum (strain DSM 17167 / CIP 108236 / LMG 21445 / STM815) (Burkholderia phymatum).